The primary structure comprises 290 residues: Protein male abnormal 3 (290 aa).

2 consecutive DNA-binding regions (DM) follow at residues 28 to 74 (CQRC…SKKK) and 94 to 142 (CARC…KLRR). Disordered stretches follow at residues 139–167 (KLRRSQQKSRDGKEPKRNSRRKSKDMDME) and 179–202 (IIGTSASPSPSSTTDTMSPSLSMS). A compositionally biased stretch (basic and acidic residues) spans 146–155 (KSRDGKEPKR). The segment covering 182–202 (TSASPSPSSTTDTMSPSLSMS) has biased composition (low complexity).

As to expression, expression is undetectable in hermaphrodites, but persists in males. In males, expressed in cells of the tail tip.

The protein localises to the nucleus. In terms of biological role, transcription factor which binds the DNA motif 5'-[CGA][TCA][TA]ACAATGT[AT][TGA]C-3', probably as a monomer. Acts partially redundantly with the transcription factor dmd-3 to coordinate tail tip cell fusion and retraction and thereby regulate male tail tip morphogenesis. Promotes male-specific development of two tissues, the peripheral nervous system and the intestine. In the peripheral nervous system, directs differentiation of sensory ray neuroblasts into peripheral sense organs. In the intestine, causes repression of vitellogenin gene transcription. In Caenorhabditis elegans, this protein is Protein male abnormal 3.